The primary structure comprises 540 residues: CWF19-like protein 1 (540 aa).

A disordered region spans residues 265 to 326 (ENPYRKSDKD…AKQPRKHPQP (62 aa)). Residues 267–277 (PYRKSDKDTPK) are compositionally biased toward basic and acidic residues.

Belongs to the CWF19 family.

The protein is CWF19-like protein 1 (cwf19l1) of Xenopus laevis (African clawed frog).